The sequence spans 749 residues: Phototropin (749 aa).

Positions 7–80 constitute a PAS 1 domain; sequence PASQLTKVLA…QKIRDAIKKG (74 aa). FMN is bound by residues 56–61, arginine 74, asparagine 89, asparagine 99, and glutamine 120; that span reads NCRFLQ. Cysteine 57 carries the post-translational modification S-4a-FMN cysteine. Residues 81 to 135 enclose the PAC 1 domain; sequence EACSVRLLNYRKDGTPFWNLLTVTPIKTPDGRVSKFVGVQVDVTSKTEGKALADN. A PAS 2 domain is found at 200-273; it reads VALDLATTVE…DQIRAAIKEG (74 aa). Residues 274–328 enclose the PAC 2 domain; that stretch reads SELTVRILNYTKAGKAFWNMFTLAPMRDQDGHARFFVGVQVDVTAQSTSPDKAPV. The Protein kinase domain maps to 404-712; that stretch reads FRRVKQLGAG…ANEIKSHPWF (309 aa). ATP contacts are provided by residues 410 to 418 and lysine 433; that span reads LGAGDVGLV. The Proton acceptor role is filled by aspartate 529. 2 disordered regions span residues 563 to 591 and 729 to 749; these read KIGG…SSSG and PRRA…FDNY. Residues 713-749 form the AGC-kinase C-terminal domain; the sequence is KGINWALLRHQQPPYVPRRASKAAGGSSTGGAAFDNY. Over residues 734–749 the composition is skewed to low complexity; it reads KAAGGSSTGGAAFDNY.

It belongs to the protein kinase superfamily. AGC Ser/Thr protein kinase family. FMN is required as a cofactor. In terms of processing, autophosphorylated in response to blue light irradiation. 2 molecules of FMN bind covalently to cysteines after exposure to blue light and are reversed in the dark. As to expression, expressed in gametes, pre-gametes and gametes generated by pre-gametes (at protein level).

It localises to the membrane. It carries out the reaction L-seryl-[protein] + ATP = O-phospho-L-seryl-[protein] + ADP + H(+). It catalyses the reaction L-threonyl-[protein] + ATP = O-phospho-L-threonyl-[protein] + ADP + H(+). Its function is as follows. Protein kinase that acts as a blue light photoreceptor. Required for non-photochemical quenching (NPQ), a mechanism that converts and dissipates the harmful excess absorbed light energy into heat and protect the photosynthetic apparatus from photo-oxidative damage. Controls the energy-dependent chlorophyll fluorescence quenching (qE) activity of chlorophyll excited states by inducing the expression of the qE effector protein LHCSR3 in high light intensities. The chain is Phototropin from Chlamydomonas reinhardtii (Chlamydomonas smithii).